The primary structure comprises 885 residues: Putative membrane protein YdgH (885 aa).

The next 7 helical transmembrane spans lie at 9–29 (WAIAAIVLALTVVLSLFSPNL), 181–201 (IIGLLLIVFRSVVTPFIPIVV), 202–222 (VGFSYLISQSILGILVYNVDF), 227–247 (FTQTFLVAILFGIGTDYCILL), 278–298 (ISGFAVLIGFSALGFAKFAIF), 304–324 (VAVGVGILMIILYTLLPLFMV), and 354–374 (VARPFLFIVITVVITLPFILT). The segment at 498 to 518 (MAGQTGSASNGGSGGSLGDAA) is disordered. Transmembrane regions (helical) follow at residues 716-736 (MVIMIIGLFIVLTILFRSMIM), 740-760 (MIASLLLTYYTSISITELIFV), 772-792 (VPFFSFVILIALGVDYSIFLL), 817-837 (VIITAAIILAGTFAAMMPSGV), and 847-867 (IIIGLLLYGLVILPLFIPAII).

It belongs to the resistance-nodulation-cell division (RND) (TC 2.A.6) family. MmpL subfamily.

It is found in the cell membrane. This Bacillus subtilis (strain 168) protein is Putative membrane protein YdgH (ydgH).